The primary structure comprises 122 residues: Large ribosomal subunit protein bL17 (122 aa).

Belongs to the bacterial ribosomal protein bL17 family. Part of the 50S ribosomal subunit. Contacts protein L32.

This chain is Large ribosomal subunit protein bL17, found in Staphylococcus aureus (strain Mu3 / ATCC 700698).